Consider the following 193-residue polypeptide: Ribonuclease HII (193 aa).

Positions 15-193 constitute an RNase H type-2 domain; it reads CIVAGIDEAG…PYHRRSFRCC (179 aa). A divalent metal cation is bound by residues Asp21, Glu22, and Asp112.

The protein belongs to the RNase HII family. It depends on Mn(2+) as a cofactor. Requires Mg(2+) as cofactor.

The protein localises to the cytoplasm. The enzyme catalyses Endonucleolytic cleavage to 5'-phosphomonoester.. Endonuclease that specifically degrades the RNA of RNA-DNA hybrids. This is Ribonuclease HII from Rickettsia africae (strain ESF-5).